Consider the following 300-residue polypeptide: UDP-N-acetylenolpyruvoylglucosamine reductase (300 aa).

The FAD-binding PCMH-type domain maps to 27 to 216 (RVGGPADVIF…TERREKTQPI (190 aa)). Arg-172 is an active-site residue. Catalysis depends on Ser-223, which acts as the Proton donor. Residue Glu-293 is part of the active site.

It belongs to the MurB family. FAD is required as a cofactor.

The protein localises to the cytoplasm. It catalyses the reaction UDP-N-acetyl-alpha-D-muramate + NADP(+) = UDP-N-acetyl-3-O-(1-carboxyvinyl)-alpha-D-glucosamine + NADPH + H(+). It functions in the pathway cell wall biogenesis; peptidoglycan biosynthesis. Cell wall formation. This chain is UDP-N-acetylenolpyruvoylglucosamine reductase, found in Phenylobacterium zucineum (strain HLK1).